A 154-amino-acid polypeptide reads, in one-letter code: MIIKNLQEFYRLLIPNAPLIAIDYGSKKLGIALSNQERSIAMPLNTITEINKKIVITSLLNIIEKYKVCGVIIGLPIDMSGAVTEQTNIVMKFAEELAKSINLPIYLQDERLTTKAANNLLKSFGVKRKDRNNNDDAVAASMILETVLDSIKNI.

It belongs to the YqgF nuclease family.

It is found in the cytoplasm. Could be a nuclease involved in processing of the 5'-end of pre-16S rRNA. The polypeptide is Putative pre-16S rRNA nuclease (Rickettsia peacockii (strain Rustic)).